A 304-amino-acid polypeptide reads, in one-letter code: DDRGK domain-containing protein 1 (304 aa).

Over 1–2 the chain is Lumenal; sequence MD. Residues 3–23 form a helical membrane-spanning segment; sequence LIILVGIAIALLVVIISLYLL. Residues 24 to 304 are Cytoplasmic-facing; sequence QKKNSTTEAK…LTPVSAEGSS (281 aa). The tract at residues 31–174 is disordered; it reads EAKPAAAAPQ…AERLAKEERE (144 aa). The segment covering 53–82 has biased composition (low complexity); the sequence is RRAQIARNQRNRLRQNAPVAAAAPQAEAPA. Over residues 105–174 the composition is skewed to basic and acidic residues; it reads LDEKMGAKKR…AERLAKEERE (70 aa).

The protein belongs to the DDRGK1 family. Interacts with Atg9; the interaction is transient.

The protein resides in the endoplasmic reticulum membrane. Functionally, substrate adapter for ufmylation, the covalent attachment of the ubiquitin-like modifier UFM1 to substrate proteins. Required for ufmylation of Atg9; protects the nervous system during aging, possibly by stabilizing Atg9 and supporting its function. The protein is DDRGK domain-containing protein 1 of Drosophila ananassae (Fruit fly).